A 295-amino-acid polypeptide reads, in one-letter code: Homeobox protein XHOX-7.1 (295 aa).

2 disordered regions span residues 75–115 (RKPG…PISL) and 134–175 (KPES…KPRT). The segment covering 84-97 (SSPTGSPLAGTSHS) has biased composition (polar residues). The span at 141 to 153 (SSWIQSPSFSPSP) shows a compositional bias: low complexity. The segment covering 164–174 (LRKHKTNRKPR) has biased composition (basic residues). The homeobox DNA-binding region spans 170-229 (NRKPRTPFTTSQLLALERKFRQKQYLSIAERAEFSSSLNLTETQVKIWFQNRRAKAKRLQ).

It belongs to the Msh homeobox family.

It is found in the nucleus. This chain is Homeobox protein XHOX-7.1, found in Xenopus laevis (African clawed frog).